Reading from the N-terminus, the 67-residue chain is Large ribosomal subunit protein bL35 (67 aa).

Belongs to the bacterial ribosomal protein bL35 family.

This chain is Large ribosomal subunit protein bL35, found in Acidovorax ebreus (strain TPSY) (Diaphorobacter sp. (strain TPSY)).